The sequence spans 466 residues: Glutamate--tRNA ligase (466 aa).

The short motif at P9 to S19 is the 'HIGH' region element. A 'KMSKS' region motif is present at residues K237–R241. K240 contributes to the ATP binding site.

This sequence belongs to the class-I aminoacyl-tRNA synthetase family. Glutamate--tRNA ligase type 1 subfamily. In terms of assembly, monomer.

Its subcellular location is the cytoplasm. The catalysed reaction is tRNA(Glu) + L-glutamate + ATP = L-glutamyl-tRNA(Glu) + AMP + diphosphate. Functionally, catalyzes the attachment of glutamate to tRNA(Glu) in a two-step reaction: glutamate is first activated by ATP to form Glu-AMP and then transferred to the acceptor end of tRNA(Glu). The polypeptide is Glutamate--tRNA ligase (Baumannia cicadellinicola subsp. Homalodisca coagulata).